A 499-amino-acid chain; its full sequence is ADP,ATP carrier protein 5 (499 aa).

The next 11 helical transmembrane spans lie at 25–45 (LGKFIPMSALMFCILFNQNIL), 61–81 (IAGFAKVYCVTPAAALFVIIY), 93–113 (IFYYLSAFFISFFVLFAFVIY), 148–168 (YIVYYSLAELWPNIFYVLLFW), 183–203 (FYTFFSLFGNSSLILVGFLMM), 223–243 (ITLVQVSTTIVAIVAIVCCVL), 286–306 (LWLLLICSAAFGFAINLVEAV), 327–347 (LYILWTGVAIMVMTIIGNNVM), 356–376 (AVISPVIIMVTGILFFVLIVF), 380–400 (ILSLFDGAILMSPLALAVSIG), and 468–488 (SISPILMVVFTFVCLAWIYAV).

It belongs to the ADP/ATP translocase tlc family.

Its subcellular location is the cell membrane. Provides the rickettsial cell with host ATP in exchange for rickettsial ADP. This is an obligate exchange system. This energy acquiring activity is an important component of rickettsial parasitism. The sequence is that of ADP,ATP carrier protein 5 (tlcE) from Rickettsia felis (strain ATCC VR-1525 / URRWXCal2) (Rickettsia azadi).